We begin with the raw amino-acid sequence, 449 residues long: Transcription factor AP-2 gamma (449 aa).

K10 is covalently cross-linked (Glycyl lysine isopeptide (Lys-Gly) (interchain with G-Cter in SUMO)). The segment at 13–58 (EDCEDRHDSSSNGNPRIPHLSSPGQHLYSPAPPLSHTGVAEYQPPP) is disordered. Residues 59–64 (YFPPPY) carry the PPxY motif motif. Positions 94-130 (AATGSQQQAWPGRQSQEGSSLASHHSRSASLIPHISG) are disordered. The segment covering 95 to 111 (ATGSQQQAWPGRQSQEG) has biased composition (polar residues). Positions 112 to 124 (SSLASHHSRSASL) are enriched in low complexity. The residue at position 251 (S251) is a Phosphoserine; by PKA. The interval 292-423 (RRKAAHVTLL…YIKEALIAID (132 aa)) is H-S-H (helix-span-helix), dimerization. Positions 426 to 449 (YMNPGDQSPADSSKTMEKMEKHRK) are disordered. S433 bears the Phosphoserine mark. The span at 439–449 (KTMEKMEKHRK) shows a compositional bias: basic and acidic residues.

It belongs to the AP-2 family. In terms of assembly, binds DNA as a dimer. Can form homodimers or heterodimers with other AP-2 family members. Interacts with WWOX. Interacts with UBE2I. Interacts with KCTD1; this interaction represses transcription activation. Interacts with CITED2 (via C-terminus); the interaction stimulates TFAP2B-transcriptional activity. Interacts with CITED4. Interacts with MTA1. In terms of processing, sumoylated on Lys-10; which inhibits transcriptional activity. Expressed in lung, ovary and testis. Expressed in most squamous epithelia. Also, detected in several exocrine glands including the prostate, the preputial and salivary glands, serous glands of the tongue and ocular harderian glands.

The protein resides in the nucleus. In terms of biological role, sequence-specific DNA-binding transcription factor that interacts with cellular enhancer elements to regulate transcription of selected genes, and which plays a key role in early embryonic development. AP-2 factors bind to the consensus sequence 5'-GCCNNNGGC-3' and activate genes involved in a large spectrum of important biological functions. TFAP2C plays a key role in early embryonic development by regulating both inner cell mass (ICM) and trophectoderm differentiation. At the 8-cell stage, during morula development, controls expression of cell-polarity genes. Upon trophoblast commitment, binds to late trophectoderm genes in blastocysts together with CDX2, and later to extra-embryonic ectoderm genes together with SOX2. Binds to both closed and open chromatin with other transcription factors. The sequence is that of Transcription factor AP-2 gamma from Mus musculus (Mouse).